Here is a 546-residue protein sequence, read N- to C-terminus: UDP-glycosyltransferase FPY2 (546 aa).

The first 20 residues, 1–20, serve as a signal peptide directing secretion; it reads MSLPKAQILVVVTVGGSTNS. The chain crosses the membrane as a helical span at residues 517–537; sequence LNNIDVALLFFILLGIISWIT.

Belongs to the glycosyltransferase 28 family.

It is found in the membrane. It functions in the pathway secondary metabolite biosynthesis. In terms of biological role, UDP-glycosyltransferase; part of the gene cluster that mediates the biosynthesis of the gamma-pyrones fusapyrone (FPY) and deoxyfusapyrone (dFPY). FPY is an undecaketide and thus likely synthesized by the polyketide synthase FPY1 from acetyl-CoA functioning as starter unit and the addition of 10 malonyl-CoA extender units by successive Claisen-condensations. Next to this, FPY shares some rare features: C-glycosylated 4-deoxyglucose at C-3, a gem-dimethyl group at C-13, and an alpha-beta to beta-gamma double bond shift at C-20. During FPY biosynthesis mono-C-methyl groups are transferred to the tetra-, penta-, hexa- and heptaketide, while two C-methyl groups are transferred to the nonaketide, suggesting that the CMet domain is programmed to selectively catalyze two successive C-alpha-methylation reactions of the nonaketide, while other alpha-carbons are non- or mono-methylated only. While the origin of the 4'-deoxyglucose moiety remains opaque, its transfer to C-3 is most likely mediated by the C-glycosyltransferase FPY2. Next to this, the hydroxyl group present at C-33 and discriminating between FPY and dFPY, is likely to be installed by the cytochrome P450 monooxygenase FPY7. No putative function can be predicted for the remaining genes FPY3-FPY6. In Fusarium mangiferae (Mango malformation disease fungus), this protein is UDP-glycosyltransferase FPY2.